The following is a 107-amino-acid chain: MKANLGNLMKQAQQMQENMKAMQEKLAAIEVEGQAGAGMVKVTMTCRYDVKRVNIDSSLIGDDKEMLEDLVAAAVNDAVRRVETVTQEKMASVAGGLGLPAGMKFPF.

Belongs to the YbaB/EbfC family. In terms of assembly, homodimer.

It localises to the cytoplasm. Its subcellular location is the nucleoid. Functionally, binds to DNA and alters its conformation. May be involved in regulation of gene expression, nucleoid organization and DNA protection. This Nitrosomonas europaea (strain ATCC 19718 / CIP 103999 / KCTC 2705 / NBRC 14298) protein is Nucleoid-associated protein NE0434.